The primary structure comprises 198 residues: Holliday junction branch migration complex subunit RuvA (198 aa).

A domain I region spans residues 1 to 61 (MILYRIGEII…EYQYATYAFK (61 aa)). Residues 62 to 139 (DFKERLLFVD…KMISPKDAAK (78 aa)) form a domain II region. A flexible linker region spans residues 140 to 144 (INETT). Positions 144–198 (TNTLSEVKETLKMVGFKTKQIDGALSKISSTDDVEKMIEEAIKLMSTQNYESATA) are domain III.

This sequence belongs to the RuvA family. As to quaternary structure, homotetramer. Forms an RuvA(8)-RuvB(12)-Holliday junction (HJ) complex. HJ DNA is sandwiched between 2 RuvA tetramers; dsDNA enters through RuvA and exits via RuvB. An RuvB hexamer assembles on each DNA strand where it exits the tetramer. Each RuvB hexamer is contacted by two RuvA subunits (via domain III) on 2 adjacent RuvB subunits; this complex drives branch migration. In the full resolvosome a probable DNA-RuvA(4)-RuvB(12)-RuvC(2) complex forms which resolves the HJ.

Its subcellular location is the cytoplasm. Its function is as follows. The RuvA-RuvB-RuvC complex processes Holliday junction (HJ) DNA during genetic recombination and DNA repair, while the RuvA-RuvB complex plays an important role in the rescue of blocked DNA replication forks via replication fork reversal (RFR). RuvA specifically binds to HJ cruciform DNA, conferring on it an open structure. The RuvB hexamer acts as an ATP-dependent pump, pulling dsDNA into and through the RuvAB complex. HJ branch migration allows RuvC to scan DNA until it finds its consensus sequence, where it cleaves and resolves the cruciform DNA. The chain is Holliday junction branch migration complex subunit RuvA from Mycoplasmopsis agalactiae (strain NCTC 10123 / CIP 59.7 / PG2) (Mycoplasma agalactiae).